We begin with the raw amino-acid sequence, 300 residues long: 33 kDa chaperonin (300 aa).

Intrachain disulfides connect Cys235-Cys237 and Cys269-Cys272.

It belongs to the HSP33 family. Post-translationally, under oxidizing conditions two disulfide bonds are formed involving the reactive cysteines. Under reducing conditions zinc is bound to the reactive cysteines and the protein is inactive.

Its subcellular location is the cytoplasm. Its function is as follows. Redox regulated molecular chaperone. Protects both thermally unfolding and oxidatively damaged proteins from irreversible aggregation. Plays an important role in the bacterial defense system toward oxidative stress. The chain is 33 kDa chaperonin from Pseudomonas savastanoi pv. phaseolicola (strain 1448A / Race 6) (Pseudomonas syringae pv. phaseolicola (strain 1448A / Race 6)).